The chain runs to 1118 residues: Receptor-type guanylate cyclase gcy-2 (1118 aa).

A signal peptide spans 1–21 (MVSSILKFVILIHSTFHSTFA). Residues 22–494 (QNLPDTTVAP…FCPISFWEQY (473 aa)) lie on the Extracellular side of the membrane. Asparagine 222, asparagine 351, asparagine 361, asparagine 387, asparagine 420, and asparagine 452 each carry an N-linked (GlcNAc...) asparagine glycan. A helical transmembrane segment spans residues 495–515 (MILAIVSISVIVLMVIIMIIG). At 516–1118 (CLCVISAKHA…FKMDTLKVAN (603 aa)) the chain is on the cytoplasmic side. Positions 558-875 (LQSAPSISTG…EGFDSVTVFF (318 aa)) constitute a Protein kinase domain. The 131-residue stretch at 872 to 1002 (TVFFSDVVKF…DTVNTASRME (131 aa)) folds into the Guanylate cyclase domain. Residues 1076 to 1103 (WITPPAPKPEIRSVSSHGSRPPSVYDPL) are disordered.

This sequence belongs to the adenylyl cyclase class-4/guanylyl cyclase family. Expressed bilaterally in AWA and ASI sensory neurons and in RIA and PVT interneurons.

Its subcellular location is the cell membrane. It catalyses the reaction GTP = 3',5'-cyclic GMP + diphosphate. Functionally, guanylate cyclase involved in the production of the second messenger cGMP. This chain is Receptor-type guanylate cyclase gcy-2, found in Caenorhabditis elegans.